Reading from the N-terminus, the 281-residue chain is Probable endonuclease 4 (281 aa).

Zn(2+)-binding residues include His69, His109, Glu145, Asp179, His182, His216, Asp229, His231, and Glu261.

It belongs to the AP endonuclease 2 family. It depends on Zn(2+) as a cofactor.

It catalyses the reaction Endonucleolytic cleavage to 5'-phosphooligonucleotide end-products.. Its function is as follows. Endonuclease IV plays a role in DNA repair. It cleaves phosphodiester bonds at apurinic or apyrimidinic (AP) sites, generating a 3'-hydroxyl group and a 5'-terminal sugar phosphate. This is Probable endonuclease 4 from Proteus mirabilis (strain HI4320).